A 351-amino-acid chain; its full sequence is MAAVPSTISWPQRLEQLLQGQDLSASEASSLMQAWLAEELSPVQTGAFLAGLRAKGMVADELAAMASVLRGACPLPCDRPNLAMVDTCGTGGDGADTFNISTAVAFTAAALGVNVAKHGNRSASGKVGSADVLEGLGLNLKAPLASVVEAISTTGVTFLFAPAWHPALVNLAPLRRSLGVRTVFNLLGPLVNPLQPQAQVLGVARADLLDPMAGALDQLGLDRAVVVHGAGGLDEASLAGANELRMVEAGKPIATRFVSPDDLGLAAAPLEALRGGDLADNQRILENVLKGEATPAQIDVVAFNTALVLWVAGVELDLKAAARRASDTLRDGLPWQKLQDLQRALSHGNGQ.

Residues Gly89, 92-93 (GD), Thr97, 99-102 (NIST), 117-125 (KHGNRSASG), and Ser129 each bind 5-phospho-alpha-D-ribose 1-diphosphate. Anthranilate is bound at residue Gly89. Ser101 provides a ligand contact to Mg(2+). Asn120 is a binding site for anthranilate. Arg175 lines the anthranilate pocket. The Mg(2+) site is built by Asp234 and Glu235.

This sequence belongs to the anthranilate phosphoribosyltransferase family. In terms of assembly, homodimer. The cofactor is Mg(2+).

The catalysed reaction is N-(5-phospho-beta-D-ribosyl)anthranilate + diphosphate = 5-phospho-alpha-D-ribose 1-diphosphate + anthranilate. It functions in the pathway amino-acid biosynthesis; L-tryptophan biosynthesis; L-tryptophan from chorismate: step 2/5. In terms of biological role, catalyzes the transfer of the phosphoribosyl group of 5-phosphorylribose-1-pyrophosphate (PRPP) to anthranilate to yield N-(5'-phosphoribosyl)-anthranilate (PRA). The polypeptide is Anthranilate phosphoribosyltransferase (Synechococcus sp. (strain CC9902)).